Reading from the N-terminus, the 902-residue chain is Probable polyribonucleotide nucleotidyltransferase 1, chloroplastic (902 aa).

The N-terminal 66 residues, 1–66 (MLATPGALHH…RRRAAGARVR (66 aa)), are a transit peptide targeting the chloroplast. Over residues 44–53 (VAASASTSRR) the composition is skewed to low complexity. The tract at residues 44–93 (VAASASTSRRGGARRRAAGARVRASVGEEAPPVVTEEASTSGGPTKFSTK) is disordered. Polar residues predominate over residues 80–91 (EASTSGGPTKFS). The 61-residue stretch at 693–753 (PLIHVMKVKP…SSLEKSKAII (61 aa)) folds into the KH domain. The S1 motif domain maps to 763–832 (GEIYRNCEIK…DKGQLRLSSR (70 aa)). Positions 833 to 902 (ALLPDANQES…ASQGSEMGTE (70 aa)) are disordered. The segment covering 839-850 (NQESSSKQQAGG) has biased composition (polar residues). Basic and acidic residues predominate over residues 852–862 (TREKAPQKDNL). Residues 877 to 888 (EASTAENNATAS) are compositionally biased toward low complexity.

The protein belongs to the polyribonucleotide nucleotidyltransferase family.

It localises to the plastid. It is found in the chloroplast. The enzyme catalyses RNA(n+1) + phosphate = RNA(n) + a ribonucleoside 5'-diphosphate. Its function is as follows. Involved in the metabolism of all major classes of plastid RNAs. Required for efficient 3'-end processing of mRNAs and 3'-end maturation of rRNA transcripts, but is not sufficient to mediate their degradation. Mediates tRNA degradation. May function as a poly(A) mRNA 3'-5' degrading phosphorylase. The polypeptide is Probable polyribonucleotide nucleotidyltransferase 1, chloroplastic (PNP1) (Oryza sativa subsp. japonica (Rice)).